The chain runs to 292 residues: 33 kDa chaperonin (292 aa).

2 disulfide bridges follow: Cys-230–Cys-232 and Cys-263–Cys-266.

The protein belongs to the HSP33 family. Post-translationally, under oxidizing conditions two disulfide bonds are formed involving the reactive cysteines. Under reducing conditions zinc is bound to the reactive cysteines and the protein is inactive.

It localises to the cytoplasm. In terms of biological role, redox regulated molecular chaperone. Protects both thermally unfolding and oxidatively damaged proteins from irreversible aggregation. Plays an important role in the bacterial defense system toward oxidative stress. This Shigella dysenteriae serotype 1 (strain Sd197) protein is 33 kDa chaperonin.